A 220-amino-acid polypeptide reads, in one-letter code: Deoxyribose-phosphate aldolase 1 (220 aa).

Asp-89 acts as the Proton donor/acceptor in catalysis. Lys-151 (schiff-base intermediate with acetaldehyde) is an active-site residue. Lys-180 acts as the Proton donor/acceptor in catalysis.

The protein belongs to the DeoC/FbaB aldolase family. DeoC type 1 subfamily.

It localises to the cytoplasm. The enzyme catalyses 2-deoxy-D-ribose 5-phosphate = D-glyceraldehyde 3-phosphate + acetaldehyde. It functions in the pathway carbohydrate degradation; 2-deoxy-D-ribose 1-phosphate degradation; D-glyceraldehyde 3-phosphate and acetaldehyde from 2-deoxy-alpha-D-ribose 1-phosphate: step 2/2. Functionally, catalyzes a reversible aldol reaction between acetaldehyde and D-glyceraldehyde 3-phosphate to generate 2-deoxy-D-ribose 5-phosphate. This chain is Deoxyribose-phosphate aldolase 1, found in Mesoplasma florum (strain ATCC 33453 / NBRC 100688 / NCTC 11704 / L1) (Acholeplasma florum).